The following is an 84-amino-acid chain: ATP synthase subunit c (84 aa).

Transmembrane regions (helical) follow at residues 1-21 (MLAW…ALVG) and 53-73 (LLFA…VALI).

Belongs to the ATPase C chain family. In terms of assembly, F-type ATPases have 2 components, F(1) - the catalytic core - and F(0) - the membrane proton channel. F(1) has five subunits: alpha(3), beta(3), gamma(1), delta(1), epsilon(1). F(0) has three main subunits: a(1), b(2) and c(10-14). The alpha and beta chains form an alternating ring which encloses part of the gamma chain. F(1) is attached to F(0) by a central stalk formed by the gamma and epsilon chains, while a peripheral stalk is formed by the delta and b chains.

The protein localises to the cell inner membrane. F(1)F(0) ATP synthase produces ATP from ADP in the presence of a proton or sodium gradient. F-type ATPases consist of two structural domains, F(1) containing the extramembraneous catalytic core and F(0) containing the membrane proton channel, linked together by a central stalk and a peripheral stalk. During catalysis, ATP synthesis in the catalytic domain of F(1) is coupled via a rotary mechanism of the central stalk subunits to proton translocation. Its function is as follows. Key component of the F(0) channel; it plays a direct role in translocation across the membrane. A homomeric c-ring of between 10-14 subunits forms the central stalk rotor element with the F(1) delta and epsilon subunits. This chain is ATP synthase subunit c, found in Dictyoglomus thermophilum (strain ATCC 35947 / DSM 3960 / H-6-12).